The chain runs to 98 residues: Sec-independent protein translocase protein TatA (98 aa).

Residues 1–21 (MGAMSPWHWAIVALVVVILFG) traverse the membrane as a helical segment. The tract at residues 43–98 (VKEMQNDNSTPAPTAQSAPPPQSAPAELPVADTTTAPVTPPAPVQPQSQHTEPKSA) is disordered. Positions 66 to 79 (APAELPVADTTTAP) are enriched in low complexity.

Belongs to the TatA/E family. In terms of assembly, the Tat system comprises two distinct complexes: a TatABC complex, containing multiple copies of TatA, TatB and TatC subunits, and a separate TatA complex, containing only TatA subunits. Substrates initially bind to the TatABC complex, which probably triggers association of the separate TatA complex to form the active translocon.

The protein resides in the cell membrane. Part of the twin-arginine translocation (Tat) system that transports large folded proteins containing a characteristic twin-arginine motif in their signal peptide across membranes. TatA could form the protein-conducting channel of the Tat system. This is Sec-independent protein translocase protein TatA from Rhodococcus erythropolis (Arthrobacter picolinophilus).